The primary structure comprises 762 residues: 5-methyltetrahydropteroyltriglutamate--homocysteine methyltransferase (762 aa).

5-methyltetrahydropteroyltri-L-glutamate-binding positions include 17 to 20 (REWK) and K111. Residues 435–437 (IGS) and E488 contribute to the L-homocysteine site. L-methionine contacts are provided by residues 435 to 437 (IGS) and E488. 5-methyltetrahydropteroyltri-L-glutamate is bound by residues 519-520 (RC) and W565. D603 is an L-homocysteine binding site. D603 lines the L-methionine pocket. 5-methyltetrahydropteroyltri-L-glutamate is bound at residue E609. Positions 645, 647, and 669 each coordinate Zn(2+). H698 acts as the Proton donor in catalysis. C730 provides a ligand contact to Zn(2+).

Belongs to the vitamin-B12 independent methionine synthase family. Zn(2+) is required as a cofactor.

It catalyses the reaction 5-methyltetrahydropteroyltri-L-glutamate + L-homocysteine = tetrahydropteroyltri-L-glutamate + L-methionine. It functions in the pathway amino-acid biosynthesis; L-methionine biosynthesis via de novo pathway; L-methionine from L-homocysteine (MetE route): step 1/1. Functionally, catalyzes the transfer of a methyl group from 5-methyltetrahydrofolate to homocysteine resulting in methionine formation. The chain is 5-methyltetrahydropteroyltriglutamate--homocysteine methyltransferase from Bacillus anthracis (strain A0248).